A 144-amino-acid chain; its full sequence is Cathelicidin-4 (144 aa).

Residues 1-29 (MQTQRASLSLGRWSLWLLLLGLVVPSASA) form the signal peptide. The propeptide occupies 30–130 (QALSYREAVL…DLNCNELQSV (101 aa)). Intrachain disulfides connect C85/C96 and C107/C124. R143 carries the post-translational modification Arginine amide.

The protein belongs to the cathelicidin family. Elastase might be responsible for its maturation. In terms of tissue distribution, large granules of neutrophils.

Its subcellular location is the secreted. Functionally, potent microbicidal activity; active against S.aureus and E.coli. In Bos taurus (Bovine), this protein is Cathelicidin-4 (CATHL4).